Consider the following 482-residue polypeptide: MAPNAADKCPVMNNAAEKCPVMHSNGVSSIQSHGPRDIYTLEALSHFNREKIPERAVHAKGTGAYGEFEVTADISDICNVDMLLGVGKKTQCVTRFSTTGLERGSSDGVRDLKGMAVKFFTEQGDWDWVSLNFPFFFIRDPAKFPDMIHSQRRDPQTNLLNPSMTWDFVTKNPEALHMTLLQHSDFGTMFTWRTLSSYAGHAFKWVMPDGSFKYVHFFLASDRGPNFTDGSTAKIDPNDPDFATKDLFEAIERGDYPTWTANVQVIDPKDAPKLGFNILDITKHWNLGTYPKGLDTIPSRPFGKLTLNRNVKDYFTEVEKLAFSPSNLVPGVEPSEDPILQARMFAYPDAQRYRLGIDHLKAPIRRKETSCKHDLGPEFDQWLSQVTSESWSHPHEDDYKFAREYYEVLPEFRSQEFQDRMVENLYKSVAQGPEDLRKRVYETFELVSTELARRVREGAEVIVADMAQPDSPERAQPGQQRL.

Residue histidine 58 is part of the active site. Position 347 (tyrosine 347) interacts with heme.

The protein belongs to the catalase family. The cofactor is heme.

The protein operates within alkaloid biosynthesis; ergot alkaloid biosynthesis. Catalase; part of the gene cluster that mediates the biosynthesis of fungal ergot alkaloid. DmaW catalyzes the first step of ergot alkaloid biosynthesis by condensing dimethylallyl diphosphate (DMAP) and tryptophan to form 4-dimethylallyl-L-tryptophan. The second step is catalyzed by the methyltransferase easF that methylates 4-dimethylallyl-L-tryptophan in the presence of S-adenosyl-L-methionine, resulting in the formation of 4-dimethylallyl-L-abrine. The catalase easC and the FAD-dependent oxidoreductase easE then transform 4-dimethylallyl-L-abrine to chanoclavine-I which is further oxidized by easD in the presence of NAD(+), resulting in the formation of chanoclavine-I aldehyde. Chanoclavine-I aldehyde is the precursor of ergoamides and ergopeptines in Clavicipitaceae, and clavine-type alcaloids such as fumiclavine in Trichocomaceae. However, the metabolites downstream of chanoclavine-I aldehyde in Arthrodermataceae have not been identified yet. This Arthroderma otae (strain ATCC MYA-4605 / CBS 113480) (Microsporum canis) protein is Catalase easC.